The primary structure comprises 118 residues: Small ribosomal subunit protein uS13 (118 aa).

The tract at residues 94 to 118 (SLPVHGQRTKTNARTCKGPRKPIKK) is disordered.

Belongs to the universal ribosomal protein uS13 family. In terms of assembly, part of the 30S ribosomal subunit. Forms a loose heterodimer with protein S19. Forms two bridges to the 50S subunit in the 70S ribosome.

Its function is as follows. Located at the top of the head of the 30S subunit, it contacts several helices of the 16S rRNA. In the 70S ribosome it contacts the 23S rRNA (bridge B1a) and protein L5 of the 50S subunit (bridge B1b), connecting the 2 subunits; these bridges are implicated in subunit movement. Contacts the tRNAs in the A and P-sites. The sequence is that of Small ribosomal subunit protein uS13 from Buchnera aphidicola subsp. Acyrthosiphon pisum (strain 5A).